Reading from the N-terminus, the 71-residue chain is Small ribosomal subunit protein bS21 (71 aa).

The protein belongs to the bacterial ribosomal protein bS21 family.

This Chromohalobacter salexigens (strain ATCC BAA-138 / DSM 3043 / CIP 106854 / NCIMB 13768 / 1H11) protein is Small ribosomal subunit protein bS21.